A 139-amino-acid polypeptide reads, in one-letter code: Serpin-like protein HMSD (139 aa).

An N-terminal signal peptide occupies residues 1 to 20 (MSISSALAMVFMGAKGNTAA). N-linked (GlcNAc...) asparagine glycosylation is present at asparagine 50.

Belongs to the serpin family. In terms of tissue distribution, highly expressed in dendritic cells and primary leukemia cells, especially those of myeloid lineage.

The protein localises to the secreted. Putative serine protease inhibitor. This Homo sapiens (Human) protein is Serpin-like protein HMSD (HMSD).